A 482-amino-acid polypeptide reads, in one-letter code: tRNA sulfurtransferase (482 aa).

One can recognise a THUMP domain in the interval 61 to 165; the sequence is AAIVAELTRI…DERLILVTAR (105 aa). Residues 183-184, Lys265, Gly287, and Gln296 each bind ATP; that span reads LI. Cys344 and Cys456 form a disulfide bridge. The Rhodanese domain occupies 404–482; it reads FSHNDVILDI…GFKNVKVYRP (79 aa). The Cysteine persulfide intermediate role is filled by Cys456.

The protein belongs to the ThiI family.

It localises to the cytoplasm. It catalyses the reaction [ThiI sulfur-carrier protein]-S-sulfanyl-L-cysteine + a uridine in tRNA + 2 reduced [2Fe-2S]-[ferredoxin] + ATP + H(+) = [ThiI sulfur-carrier protein]-L-cysteine + a 4-thiouridine in tRNA + 2 oxidized [2Fe-2S]-[ferredoxin] + AMP + diphosphate. The catalysed reaction is [ThiS sulfur-carrier protein]-C-terminal Gly-Gly-AMP + S-sulfanyl-L-cysteinyl-[cysteine desulfurase] + AH2 = [ThiS sulfur-carrier protein]-C-terminal-Gly-aminoethanethioate + L-cysteinyl-[cysteine desulfurase] + A + AMP + 2 H(+). Its pathway is cofactor biosynthesis; thiamine diphosphate biosynthesis. Its function is as follows. Catalyzes the ATP-dependent transfer of a sulfur to tRNA to produce 4-thiouridine in position 8 of tRNAs, which functions as a near-UV photosensor. Also catalyzes the transfer of sulfur to the sulfur carrier protein ThiS, forming ThiS-thiocarboxylate. This is a step in the synthesis of thiazole, in the thiamine biosynthesis pathway. The sulfur is donated as persulfide by IscS. This is tRNA sulfurtransferase from Erwinia tasmaniensis (strain DSM 17950 / CFBP 7177 / CIP 109463 / NCPPB 4357 / Et1/99).